A 448-amino-acid polypeptide reads, in one-letter code: Biotin carboxylase (448 aa).

Residues 1–445 (MLEKVVIANR…NIHYLEKKLG (445 aa)) enclose the Biotin carboxylation domain. ATP contacts are provided by residues K116, K159, 165–166 (GG), 201–204 (EKYL), H209, and H236. An ATP-grasp domain is found at 120 to 317 (IKAMKKAGVP…LVKEQLRIAA (198 aa)). Hydrogencarbonate is bound at residue K238. ATP is bound by residues E276 and E288. Mg(2+) is bound by residues E276, E288, and N290. Mn(2+) is bound by residues E276, E288, and N290. Residues R292, V295, and R338 each contribute to the hydrogencarbonate site. R292 is a catalytic residue. R338 is a biotin binding site.

As to quaternary structure, acetyl-CoA carboxylase is a heterohexamer of biotin carboxyl carrier protein, biotin carboxylase and the two subunits of carboxyl transferase in a 2:2 complex. Requires Mg(2+) as cofactor. Mn(2+) serves as cofactor.

It carries out the reaction N(6)-biotinyl-L-lysyl-[protein] + hydrogencarbonate + ATP = N(6)-carboxybiotinyl-L-lysyl-[protein] + ADP + phosphate + H(+). It functions in the pathway lipid metabolism; malonyl-CoA biosynthesis; malonyl-CoA from acetyl-CoA: step 1/1. In terms of biological role, this protein is a component of the acetyl coenzyme A carboxylase complex; first, biotin carboxylase catalyzes the carboxylation of the carrier protein and then the transcarboxylase transfers the carboxyl group to form malonyl-CoA. This chain is Biotin carboxylase (accC), found in Haemophilus influenzae (strain ATCC 51907 / DSM 11121 / KW20 / Rd).